Consider the following 216-residue polypeptide: Large ribosomal subunit protein uL3 (216 aa).

The tract at residues 137-158 (GASHGAHKNHRKPGSIGGASTP) is disordered.

The protein belongs to the universal ribosomal protein uL3 family. As to quaternary structure, part of the 50S ribosomal subunit. Forms a cluster with proteins L14 and L19.

Its function is as follows. One of the primary rRNA binding proteins, it binds directly near the 3'-end of the 23S rRNA, where it nucleates assembly of the 50S subunit. The protein is Large ribosomal subunit protein uL3 of Pseudarthrobacter chlorophenolicus (strain ATCC 700700 / DSM 12829 / CIP 107037 / JCM 12360 / KCTC 9906 / NCIMB 13794 / A6) (Arthrobacter chlorophenolicus).